A 318-amino-acid chain; its full sequence is Porphobilinogen deaminase (318 aa).

Cys245 bears the S-(dipyrrolylmethanemethyl)cysteine mark.

This sequence belongs to the HMBS family. In terms of assembly, monomer. The cofactor is dipyrromethane.

The enzyme catalyses 4 porphobilinogen + H2O = hydroxymethylbilane + 4 NH4(+). Its pathway is porphyrin-containing compound metabolism; protoporphyrin-IX biosynthesis; coproporphyrinogen-III from 5-aminolevulinate: step 2/4. It participates in porphyrin-containing compound metabolism; chlorophyll biosynthesis. Functionally, tetrapolymerization of the monopyrrole PBG into the hydroxymethylbilane pre-uroporphyrinogen in several discrete steps. The sequence is that of Porphobilinogen deaminase from Prochlorococcus marinus (strain MIT 9215).